A 438-amino-acid chain; its full sequence is DNA primase DnaG (438 aa).

One can recognise a Toprim domain in the interval 169-243 (DSIIVVEGRA…DIDYVARAPY (75 aa)). The Mg(2+) site is built by Glu175, Asp217, and Asp219.

Belongs to the archaeal DnaG primase family. Forms a ternary complex with MCM helicase and DNA. Mg(2+) serves as cofactor.

The catalysed reaction is ssDNA + n NTP = ssDNA/pppN(pN)n-1 hybrid + (n-1) diphosphate.. In terms of biological role, RNA polymerase that catalyzes the synthesis of short RNA molecules used as primers for DNA polymerase during DNA replication. This Methanococcus maripaludis (strain C5 / ATCC BAA-1333) protein is DNA primase DnaG.